The sequence spans 413 residues: Alpha-1-antitrypsin-like protein GS55-MS (413 aa).

Residues 1 to 24 (MPSSISWGLLLLAGLSCLVAGSLA) form the signal peptide. Asn-65, Asn-102, and Asn-266 each carry an N-linked (GlcNAc...) asparagine glycan. An RCL region spans residues 368 to 387 (GATFLEMMPMSLPPEVKFDK).

It belongs to the serpin family.

The protein resides in the secreted. Inhibitor of serine proteases. Its primary target is elastase, but it also has a moderate affinity for plasmin and thrombin. The sequence is that of Alpha-1-antitrypsin-like protein GS55-MS from Ictidomys tridecemlineatus (Thirteen-lined ground squirrel).